Consider the following 810-residue polypeptide: Phenylalanine--tRNA ligase beta subunit (810 aa).

The region spanning 40 to 153 (KLPDQKVIVG…EACEIGQPLA (114 aa)) is the tRNA-binding domain. In terms of domain architecture, B5 spans 399-480 (AAQKIVSLRP…RLYGYNNLEP (82 aa)). Positions 458, 464, 467, and 468 each coordinate Mg(2+). The 95-residue stretch at 714–808 (SKFPVVERDL…ARSELGAVIR (95 aa)) folds into the FDX-ACB domain.

This sequence belongs to the phenylalanyl-tRNA synthetase beta subunit family. Type 1 subfamily. As to quaternary structure, tetramer of two alpha and two beta subunits. Mg(2+) serves as cofactor.

The protein localises to the cytoplasm. It carries out the reaction tRNA(Phe) + L-phenylalanine + ATP = L-phenylalanyl-tRNA(Phe) + AMP + diphosphate + H(+). This chain is Phenylalanine--tRNA ligase beta subunit, found in Chlorobaculum tepidum (strain ATCC 49652 / DSM 12025 / NBRC 103806 / TLS) (Chlorobium tepidum).